A 180-amino-acid polypeptide reads, in one-letter code: uncharacterized protein (180 aa).

In terms of domain architecture, Macro spans 1–180 (MVEFEIVKGD…KDYERALRAV (180 aa)).

This is an uncharacterized protein from Thermococcus kodakarensis (strain ATCC BAA-918 / JCM 12380 / KOD1) (Pyrococcus kodakaraensis (strain KOD1)).